Reading from the N-terminus, the 107-residue chain is Large ribosomal subunit protein uL24 (107 aa).

Belongs to the universal ribosomal protein uL24 family. In terms of assembly, part of the 50S ribosomal subunit.

In terms of biological role, one of two assembly initiator proteins, it binds directly to the 5'-end of the 23S rRNA, where it nucleates assembly of the 50S subunit. Its function is as follows. One of the proteins that surrounds the polypeptide exit tunnel on the outside of the subunit. The sequence is that of Large ribosomal subunit protein uL24 from Coxiella burnetii (strain Dugway 5J108-111).